The primary structure comprises 250 residues: tRNA (guanine-N(1)-)-methyltransferase (250 aa).

Residues glycine 116 and isoleucine 136–leucine 141 contribute to the S-adenosyl-L-methionine site.

Belongs to the RNA methyltransferase TrmD family. Homodimer.

The protein localises to the cytoplasm. The enzyme catalyses guanosine(37) in tRNA + S-adenosyl-L-methionine = N(1)-methylguanosine(37) in tRNA + S-adenosyl-L-homocysteine + H(+). Its function is as follows. Specifically methylates guanosine-37 in various tRNAs. The polypeptide is tRNA (guanine-N(1)-)-methyltransferase (Pseudomonas savastanoi pv. phaseolicola (strain 1448A / Race 6) (Pseudomonas syringae pv. phaseolicola (strain 1448A / Race 6))).